The sequence spans 744 residues: Dual specificity protein kinase shkD (744 aa).

The interval 1-276 (MKRFFSNLFK…SGPPEILPEE (276 aa)) is disordered. 3 stretches are compositionally biased toward low complexity: residues 25–70 (PTTS…NSNQ), 79–107 (SPSTNQTQTPSNNTISTSPTVTTQPSFTP), and 127–200 (TSTT…QTAS). Residues 201 to 210 (VNHTSSDQSL) are compositionally biased toward polar residues. Low complexity predominate over residues 211–236 (NAQNVTQTNNNNNNNNNNNNNNNANN). The 258-residue stretch at 277 to 534 (IDRTDFLGQG…EILFRLNEIL (258 aa)) folds into the Protein kinase domain. ATP is bound by residues 283 to 291 (LGQGSFGSV) and Lys-304. Asp-400 serves as the catalytic Proton acceptor. One can recognise an SH2 domain in the interval 641–734 (WFHGDIVREQ…LVPCPKFTQE (94 aa)).

Belongs to the protein kinase superfamily. Ser/Thr protein kinase family. SH2 domain-containing protein kinase subfamily.

The protein localises to the membrane. The catalysed reaction is L-seryl-[protein] + ATP = O-phospho-L-seryl-[protein] + ADP + H(+). It carries out the reaction L-threonyl-[protein] + ATP = O-phospho-L-threonyl-[protein] + ADP + H(+). Functionally, required for proper chemotaxis and phagocytosis; proper spatiotemporal control of F-actin levels in chemotaxing cells. Negative regulator of the PI3K (phosphatidylinositol 3 kinase) pathway. Predominantly phosphorylates serines and threonines and tyrosines at a lower level. The protein is Dual specificity protein kinase shkD (shkD) of Dictyostelium discoideum (Social amoeba).